Here is a 341-residue protein sequence, read N- to C-terminus: L-threonine 3-dehydrogenase (341 aa).

C38 lines the Zn(2+) pocket. Residues T40 and H43 each act as charge relay system in the active site. Zn(2+) is bound by residues H63, E64, C93, C96, C99, and C107. NAD(+) is bound by residues I175, D195, R200, 262 to 264 (LGI), and 286 to 287 (IY).

The protein belongs to the zinc-containing alcohol dehydrogenase family. As to quaternary structure, homotetramer. Zn(2+) is required as a cofactor.

Its subcellular location is the cytoplasm. The enzyme catalyses L-threonine + NAD(+) = (2S)-2-amino-3-oxobutanoate + NADH + H(+). Its pathway is amino-acid degradation; L-threonine degradation via oxydo-reductase pathway; glycine from L-threonine: step 1/2. Its function is as follows. Catalyzes the NAD(+)-dependent oxidation of L-threonine to 2-amino-3-ketobutyrate. This is L-threonine 3-dehydrogenase from Shewanella sp. (strain W3-18-1).